The sequence spans 285 residues: uncharacterized protein (285 aa).

Residues methionine 1–aspartate 25 form a disordered region. Isoleucine 45–valine 69 provides a ligand contact to NADP(+). Serine 177 serves as a coordination point for substrate. Tyrosine 190 acts as the Proton acceptor in catalysis.

This sequence belongs to the short-chain dehydrogenases/reductases (SDR) family.

This is an uncharacterized protein from Bacillus subtilis (strain 168).